The following is a 767-amino-acid chain: MVGPFKKILHAHNQRFPPSSSSSLDPVVDDSSRKQTRIILSYLLHLSLSLHITYSLCLLHFFFGSSNPFSPMEESNNSAVVDFPDNFMDQLLWEECWEEEATQHDQALSSPSGLKERVACAMGHLQEVMGERELLIQLWVPVETRSGRVLSTEEQPYSINTFSQSQSLALYRDASAGYSFAAEVGSEQLVGLPGRVFLRRMPEWTPDVRFFRKEEYPRIGYARRYQVRATLALPLFQGTSGNCVAVMEMVTTHRNLEYASQLSTICHALEAFDLRTSQTSIVPASLKVTSSSSSSSRTEVASILQGICSSHGLPLAVTWGHQDSSSCLSALISASYAADHGSRCFLAACSEHHLLGGEGIAGRAFATKKQCFATDVAIFSKWSYPLSHYAKMFDLHAALAVPILTRGNRTVQFVLELFFPRDCLDIQTHSLTLASQLKLRFQSSPHLMVDDNQIAEEVRDAATPPLTQEDPKGKQVSFSFSSASSLENRKRKTKAEKDITLDTLRQHFAGSLKDAAKNIGVCPTTLKRICRQNGISRWPSRKIKKVGHSLRKLQVVMDSVEGVQGSLHLASFYSSFPQLQSSSSSSFPFINPTQTVHVPPKSPPSSSGSQSSSGSSTCCSSEEQQLGGFQKPALSHPQLLTLSSMHEDQRPVRVTSSLPPLPSATTPRKAKDGMKVKAMFGDSMLRMSLLPHSRLTDLRREIAKRFGMDDVLRSNFSLKYLDDDQEWVLLTCDADLEECIQVYKSSSLKETIRILVHHPLSRPSFGS.

Disordered stretches follow at residues 462 to 494, 590 to 622, and 646 to 672; these read ATPP…RKTK, INPT…CSSE, and HEDQ…KAKD. Residues 482–566 form the RWP-RK domain; sequence SASSLENRKR…MDSVEGVQGS (85 aa). Positions 485–506 form a coiled coil; sequence SLENRKRKTKAEKDITLDTLRQ. Low complexity-rich tracts occupy residues 604 to 622 and 655 to 667; these read PSSS…CSSE and TSSL…ATTP. The 87-residue stretch at 673–759 folds into the PB1 domain; that stretch reads GMKVKAMFGD…ETIRILVHHP (87 aa).

It is found in the nucleus. In terms of biological role, probable transcription factor. In Arabidopsis thaliana (Mouse-ear cress), this protein is Protein NLP3 (NLP3).